The chain runs to 161 residues: SsrA-binding protein (161 aa).

It belongs to the SmpB family.

The protein resides in the cytoplasm. In terms of biological role, required for rescue of stalled ribosomes mediated by trans-translation. Binds to transfer-messenger RNA (tmRNA), required for stable association of tmRNA with ribosomes. tmRNA and SmpB together mimic tRNA shape, replacing the anticodon stem-loop with SmpB. tmRNA is encoded by the ssrA gene; the 2 termini fold to resemble tRNA(Ala) and it encodes a 'tag peptide', a short internal open reading frame. During trans-translation Ala-aminoacylated tmRNA acts like a tRNA, entering the A-site of stalled ribosomes, displacing the stalled mRNA. The ribosome then switches to translate the ORF on the tmRNA; the nascent peptide is terminated with the 'tag peptide' encoded by the tmRNA and targeted for degradation. The ribosome is freed to recommence translation, which seems to be the essential function of trans-translation. The chain is SsrA-binding protein from Haemophilus influenzae (strain 86-028NP).